Consider the following 260-residue polypeptide: Cytochrome c oxidase subunit 3 (260 aa).

The next 7 membrane-spanning stretches (helical) occupy residues Pro14–Phe34, Leu41–Ile61, Gly81–Phe101, Phe126–Ala146, Ala158–Trp178, Phe196–Ile216, and Ala238–Trp258.

This sequence belongs to the cytochrome c oxidase subunit 3 family. As to quaternary structure, component of the cytochrome c oxidase (complex IV, CIV), a multisubunit enzyme composed of a catalytic core of 3 subunits and several supernumerary subunits. The complex exists as a monomer or a dimer and forms supercomplexes (SCs) in the inner mitochondrial membrane with ubiquinol-cytochrome c oxidoreductase (cytochrome b-c1 complex, complex III, CIII).

It is found in the mitochondrion inner membrane. The enzyme catalyses 4 Fe(II)-[cytochrome c] + O2 + 8 H(+)(in) = 4 Fe(III)-[cytochrome c] + 2 H2O + 4 H(+)(out). In terms of biological role, component of the cytochrome c oxidase, the last enzyme in the mitochondrial electron transport chain which drives oxidative phosphorylation. The respiratory chain contains 3 multisubunit complexes succinate dehydrogenase (complex II, CII), ubiquinol-cytochrome c oxidoreductase (cytochrome b-c1 complex, complex III, CIII) and cytochrome c oxidase (complex IV, CIV), that cooperate to transfer electrons derived from NADH and succinate to molecular oxygen, creating an electrochemical gradient over the inner membrane that drives transmembrane transport and the ATP synthase. Cytochrome c oxidase is the component of the respiratory chain that catalyzes the reduction of oxygen to water. Electrons originating from reduced cytochrome c in the intermembrane space (IMS) are transferred via the dinuclear copper A center (CU(A)) of subunit 2 and heme A of subunit 1 to the active site in subunit 1, a binuclear center (BNC) formed by heme A3 and copper B (CU(B)). The BNC reduces molecular oxygen to 2 water molecules using 4 electrons from cytochrome c in the IMS and 4 protons from the mitochondrial matrix. This is Cytochrome c oxidase subunit 3 (COIII) from Patiria pectinifera (Starfish).